The following is a 338-amino-acid chain: LINE-1 retrotransposable element ORF1 protein (338 aa).

The tract at residues 1–40 (MGKKQNRKTGNSKTQSASPPPKERSSSPATEQSWMENDFD) is disordered. Polar residues-rich tracts occupy residues 8–17 (KTGNSKTQSA) and 26–35 (SSPATEQSWM). Residues 49–153 (RSNYSELRED…QSLQEIWDYV (105 aa)) adopt a coiled-coil conformation. The segment at 157–252 (NLRLIGVPES…KGKPIRLTAD (96 aa)) is RNA recognition motif (RRM) domain. The interval 253-317 (LSAETLQARR…TTRPALKELL (65 aa)) is C-terminal domain (CTD).

Belongs to the transposase 22 family. In terms of assembly, homotrimer (via coiled coil domain). May also form larger homooligomers. May interact with DDX39A, HNRNPA1, SERBP1 and YBX1. Interacts with TEX19 and UBR2. Interacts with MOV10. Interacts with APOBEC3D; this interaction inhibits LINE-1 retrotransposition. Post-translationally, polyubiquitinated, probably by UBR2, which induces its degradation.

The protein resides in the nucleus. Its subcellular location is the nucleolus. It is found in the cytoplasm. It localises to the cytoplasmic ribonucleoprotein granule. The protein localises to the stress granule. Its function is as follows. Nucleic acid-binding protein which is essential for retrotransposition of LINE-1 elements in the genome. Functions as a nucleic acid chaperone binding its own transcript and therefore preferentially mobilizing the transcript from which they are encoded. The chain is LINE-1 retrotransposable element ORF1 protein (L1RE1) from Homo sapiens (Human).